Here is a 217-residue protein sequence, read N- to C-terminus: UPF0502 protein PFLU_2135 (217 aa).

This sequence belongs to the UPF0502 family.

This is UPF0502 protein PFLU_2135 from Pseudomonas fluorescens (strain SBW25).